The sequence spans 156 residues: Small ribosomal subunit protein bS6 (156 aa).

The disordered stretch occupies residues 98–156; that stretch reads GHDFRDQRSHHGQAGEFRKREPQQKSKEQSEFSKEKKSFSKSVTKKTVVSKPKETKEEK. The span at 113–135 shows a compositional bias: basic and acidic residues; sequence EFRKREPQQKSKEQSEFSKEKKS. Low complexity predominate over residues 137 to 147; sequence SKSVTKKTVVS.

This sequence belongs to the bacterial ribosomal protein bS6 family.

Functionally, binds together with bS18 to 16S ribosomal RNA. The sequence is that of Small ribosomal subunit protein bS6 from Mycoplasmopsis synoviae (strain 53) (Mycoplasma synoviae).